The primary structure comprises 354 residues: Selenide, water dikinase (354 aa).

The active site involves cysteine 23. ATP contacts are provided by residues lysine 26 and 54–56 (TSD). Aspartate 57 contributes to the Mg(2+) binding site. Residues aspartate 74, aspartate 97, and 145–147 (GHS) contribute to the ATP site. Aspartate 97 contributes to the Mg(2+) binding site. Aspartate 233 lines the Mg(2+) pocket.

The protein belongs to the selenophosphate synthase 1 family. Class I subfamily. In terms of assembly, homodimer. Mg(2+) is required as a cofactor.

It carries out the reaction hydrogenselenide + ATP + H2O = selenophosphate + AMP + phosphate + 2 H(+). Functionally, synthesizes selenophosphate from selenide and ATP. This chain is Selenide, water dikinase, found in Burkholderia pseudomallei (strain K96243).